The sequence spans 710 residues: uncharacterized protein (710 aa).

The disordered stretch occupies residues Met1–Glu40. Over residues Pro15–Pro25 the composition is skewed to low complexity. Residues Val108–Leu165 form the FHA domain. Coiled-coil stretches lie at residues Thr206–Glu240, Glu409–Gly440, and Ala471–Lys502. Residues Ile230–Glu250 form a disordered region. Disordered regions lie at residues Glu535–Ser560, Lys591–Ser619, and Glu671–Tyr710. Polar residues predominate over residues Gln538–Ser560. Residues Gln613–Arg661 adopt a coiled-coil conformation.

This is an uncharacterized protein from Caenorhabditis elegans.